Reading from the N-terminus, the 567-residue chain is Restriction of telomere capping protein 5 (567 aa).

One can recognise a TLDc domain in the interval 289–515 (KVMTPALLAQ…IQDVEVWGCG (227 aa)).

It belongs to the RTC5 family.

It localises to the cytoplasm. Its function is as follows. May be involved in a process influencing telomere capping. The polypeptide is Restriction of telomere capping protein 5 (RTC5) (Saccharomyces cerevisiae (strain YJM789) (Baker's yeast)).